Here is a 570-residue protein sequence, read N- to C-terminus: BRICHOS domain-containing protein C09F5.1 (570 aa).

Over 1 to 288 the chain is Cytoplasmic; the sequence is MVVEQIEVIE…YTPELLRSLC (288 aa). 2 stretches are compositionally biased toward polar residues: residues 93–107 and 228–246; these read SGAT…SGDS and TSTL…SLVS. Disordered stretches follow at residues 93 to 116 and 218 to 248; these read SGAT…GADR and SSWD…VSRE. A helical membrane pass occupies residues 289-309; that stretch reads CILLLLLLLLFLMFIIFNAIF. Topologically, residues 310–570 are extracellular; sequence NRYAVSEFLL…RKSINNATLV (261 aa). The BRICHOS domain maps to 369–461; that stretch reads TAVDFNTGYV…IDDCEGAQWY (93 aa). The cysteines at positions 395 and 455 are disulfide-linked.

The protein localises to the membrane. In Caenorhabditis elegans, this protein is BRICHOS domain-containing protein C09F5.1.